The following is a 145-amino-acid chain: Antiholin-like protein LrgA (145 aa).

The next 4 helical transmembrane spans lie at 13-30 (FFHQVIVIALVLFVSKII), 40-62 (GSVIGLVLLFVLLCTGAVKLGEV), 69-91 (LTNNIGLLFVPAGISVVNSLGVI), and 95-117 (PFLIIGLIIVSTILLLICTGYVT).

It belongs to the CidA/LrgA family. LrgA subfamily.

The protein resides in the cell membrane. Inhibits the expression or activity of extracellular murein hydrolases by interacting, possibly with LrgB, with the holin-like proteins CidA and/or CidB. The LrgAB and CidAB proteins may affect the proton motive force of the membrane. May be involved in programmed cell death (PCD), possibly triggering PCD in response to antibiotics and environmental stresses. This chain is Antiholin-like protein LrgA, found in Staphylococcus aureus (strain MW2).